A 1578-amino-acid polypeptide reads, in one-letter code: MTPQPLEQGGAVASFIPTGQEMAQRQNLIPLGRLIDFIIQRTYHELTVLAELLPRKTDMERKIEIYNFSASTRQLFIRLLALVKWANSASKVDKSAKIMAFLDKQSLLFMDTADMLSRMARETLVNARLPNFHIPAAVEILTTGTYSRLPSIIRERIVPPDPITTLEKRQTLQRLNQVIQHRLVTGNLLPQLRKFKIENGRVTFKVDHEFEVSLTVMGDGPNIPWRLLDIDILVEDKETGDGKALVHTLQVNYIHQLIQGRIVDSPDALAEVYNCLHYFCQSLQLEVLYTQTLRLMRDRLDDHIHVDEYIPGTKLTVSYWRELTNKDPKSELGYRLMIQTDQSDTTKQLAILHLPSIGTKEVDIADRAVRSELLSMERLLVHTVYVRSLARLGDLKTELQLFLKDVDYSIQGTPAMLLVPVLNPCLRAEHIYITVDTHTGMLRCHVPKHLDCPIMPELQHALNNDRSKLQHLFSELRYWITQRRCEKTLQHLPATTQERLPLVFPADHPIEKIGPHRVYIQMCRHANVILIVELKEKESSPNEMTYTFYLVLVKPSSMEDSQSVTAGGTSQSSAPSAATTESDGMPKMYLKVLSLIEFDTFVATHGPGTYVDEQTVGSKRKLLTGEGPSAKQSKTIYPAYFIPELAHVVAMCDEKLPFVALAKDLTRRKIPHGGVQVEANATSLVLKLLTLPQPKPPVIPVSSSAAAAAAAQSGPDQKPPEPKVVSVPKIDKDVWNALLKRLLSVSVRAQINKSIQTRMWTVELVFYGTPLASAHHKEQGMRRAVYLTYDMLPVDSVDKFVDMILNDWSKIVYLYTLVHDFREQIKNDKYNLHNIVTIKSYSYTSLLLAYGPNKEVNVNIYWDTEAKEFKMVFTGGNNAINAHSMMRDQLQAHLNHNYDLAQIVYLLHETYQPLSSIAKLPIIPHLAILQSPKIPVLSFCIIPQSPTLLRISFQGVYCLEVRLRGSGLCSIRDGAYSRFDRSHVVEEFTPTQGLKGFLSKYVDETAVYRRRSQSEDDNPPSPITMEDPHGGPASVGSTFLSGGAMRGPQSPRDPGLRFAAPLTPPSGSNPHTPASPHPQGIGGSQSHPNFNMTSPPAPHMPHPSPSGGLMPSSPLNPQPSPMAAHSPGPTNLPYMSGHTDSPFSAHSPAASNWPGSPGMPRPSPRPGQSPDHKAQKRLLIISLKFTAPHHNTSRVLPARSWAGAIPTLLTHEALDTLCRATIHPQKEIPGPELSPLERFLGSVFMRRQLQRIIHQEDNLTAITSNEPGVVLFKADNLQYQVFLNPNHMQSLHMKVSQAPMAPTMDGKPPYQWPPEDLQILEQFFDQRVAAPPYRPAVVTSFTRMLNLPSQVMKDFIQIMRLDLIPELGQGNKWNVQFILRMPPSATPIVPVGTTTILSHRQKILFFIQITRVPYLPNMELKDSVTMLLPMVYDMTVNHTQLAERREQIIPQLTSAVSAHLRRFVECTVLQPGECSLFPAVRDLLMNLTLPNEQPPPGQMGNQIGTMGGMAPGGPGGPGPMGGQIAPSPVGGQVVSSPNPMMHSPMQMGGGGQQSNYGGMVGGGAQSGVPGGPGAGGPN.

Residues 49–53 (LAELL) carry the LXXLL motif 1 motif. The interval 561-582 (SQSVTAGGTSQSSAPSAATTES) is disordered. Residues 565-580 (TAGGTSQSSAPSAATT) are compositionally biased toward low complexity. An LXXLL motif 2 motif is present at residues 739-743 (LKRLL). Disordered stretches follow at residues 1009–1173 (RRRS…PDHK) and 1510–1578 (APGG…GGPN). The segment covering 1084 to 1093 (SQSHPNFNMT) has biased composition (polar residues). Pro residues-rich tracts occupy residues 1095 to 1104 (PPAPHMPHPS) and 1157 to 1167 (PGMPRPSPRPG). Gly residues-rich tracts occupy residues 1510–1521 (APGGPGGPGPMG) and 1547–1578 (MGGGGQQSNYGGMVGGGAQSGVPGGPGAGGPN).

This sequence belongs to the Mediator complex subunit 14 family. As to quaternary structure, component of the Mediator complex.

It localises to the nucleus. Component of the Mediator complex, a coactivator involved in the regulated transcription of nearly all RNA polymerase II-dependent genes. Mediator functions as a bridge to convey information from gene-specific regulatory proteins to the basal RNA polymerase II transcription machinery. Mediator is recruited to promoters by direct interactions with regulatory proteins and serves as a scaffold for the assembly of a functional preinitiation complex with RNA polymerase II and the general transcription factors. The polypeptide is Mediator of RNA polymerase II transcription subunit 14 (MED14) (Aedes aegypti (Yellowfever mosquito)).